The sequence spans 342 residues: Anthranilate phosphoribosyltransferase (342 aa).

5-phospho-alpha-D-ribose 1-diphosphate is bound by residues G83, G86 to D87, T91, N93 to T96, K111 to S119, and S123. G83 lines the anthranilate pocket. S95 serves as a coordination point for Mg(2+). R169 provides a ligand contact to anthranilate. Mg(2+) is bound by residues D228 and E229.

The protein belongs to the anthranilate phosphoribosyltransferase family. In terms of assembly, homodimer. It depends on Mg(2+) as a cofactor.

It catalyses the reaction N-(5-phospho-beta-D-ribosyl)anthranilate + diphosphate = 5-phospho-alpha-D-ribose 1-diphosphate + anthranilate. The protein operates within amino-acid biosynthesis; L-tryptophan biosynthesis; L-tryptophan from chorismate: step 2/5. Functionally, catalyzes the transfer of the phosphoribosyl group of 5-phosphorylribose-1-pyrophosphate (PRPP) to anthranilate to yield N-(5'-phosphoribosyl)-anthranilate (PRA). The sequence is that of Anthranilate phosphoribosyltransferase from Chromobacterium violaceum (strain ATCC 12472 / DSM 30191 / JCM 1249 / CCUG 213 / NBRC 12614 / NCIMB 9131 / NCTC 9757 / MK).